Reading from the N-terminus, the 681-residue chain is Methionine--tRNA ligase (681 aa).

A 'HIGH' region motif is present at residues 14–24 (PYANGSIHLGH). Zn(2+) contacts are provided by Cys145, Cys148, Cys158, and Cys161. Residues 331-335 (KMSKS) carry the 'KMSKS' region motif. Residue Lys334 participates in ATP binding. Residues 579–681 (AFAAVDLRIA…AGAKPGQRVH (103 aa)) form the tRNA-binding domain.

The protein belongs to the class-I aminoacyl-tRNA synthetase family. MetG type 1 subfamily. Homodimer. Zn(2+) serves as cofactor.

It localises to the cytoplasm. The enzyme catalyses tRNA(Met) + L-methionine + ATP = L-methionyl-tRNA(Met) + AMP + diphosphate. In terms of biological role, is required not only for elongation of protein synthesis but also for the initiation of all mRNA translation through initiator tRNA(fMet) aminoacylation. In Azotobacter vinelandii (strain DJ / ATCC BAA-1303), this protein is Methionine--tRNA ligase.